A 183-amino-acid chain; its full sequence is Anterior gradient protein 1 (183 aa).

The N-terminal stretch at M1–G18 is a signal peptide.

It belongs to the AGR family. In terms of tissue distribution, from stage 18 (neurula) onward, expressed in the cement gland until it degenerates. More weakly expressed in the adjacent hatching gland.

Its subcellular location is the secreted. Functionally, does not appear to be required for cement gland formation. This Xenopus laevis (African clawed frog) protein is Anterior gradient protein 1 (ag1).